The sequence spans 244 residues: Cell adhesion molecule CEACAM4 (244 aa).

A signal peptide spans 1 to 35; it reads MGPPSAAPRGGHRPWQGLLITASLLTFWHPPTTVQ. Residues 36–139 form the Ig-like V-type domain; sequence FTIEALPSSA…DSDQATGQLH (104 aa). The Extracellular segment spans residues 36–155; that stretch reads FTIEALPSSA…PGLPVGAVAG (120 aa). Residues Asn-57, Asn-104, Asn-111, and Asn-126 are each glycosylated (N-linked (GlcNAc...) asparagine). A helical transmembrane segment spans residues 156-176; sequence IVTGVLVGVALVAALVCFLLL. Residues 177–244 lie on the Cytoplasmic side of the membrane; that stretch reads SRTGRASIQR…QIDHKADVVS (68 aa). The disordered stretch occupies residues 186-215; sequence RDLREQPPPASTPGHGPSHRSTFSAPLPSP. An ITAM motif is present at residues 222 to 236; sequence YEELLYSDANIYCQI.

It belongs to the immunoglobulin superfamily. CEA family. Interacts through its phosphorylated ITAM domain with the SH2 domain-containing cytoplasmic proteins involved in signaling processes during phagocytosis. In terms of processing, N-glycosylated. The cytoplasmic ITAM-like sequence becomes tyrosine phosphorylated by SRC family PTKs upon ligand-mediated receptor clustering and allows to initiate phagocytosis of bound ligand. In terms of tissue distribution, granulocytes.

It is found in the membrane. Functionally, granulocyte orphan receptor that acts as an trigger efficient phagocytosis of attached particles. This Homo sapiens (Human) protein is Cell adhesion molecule CEACAM4.